Reading from the N-terminus, the 545-residue chain is ATP synthase subunit alpha (545 aa).

Gly173–Thr180 contacts ATP.

This sequence belongs to the ATPase alpha/beta chains family. In terms of assembly, F-type ATPases have 2 components, CF(1) - the catalytic core - and CF(0) - the membrane proton channel. CF(1) has five subunits: alpha(3), beta(3), gamma(1), delta(1), epsilon(1). CF(0) has three main subunits: a(1), b(2) and c(9-12). The alpha and beta chains form an alternating ring which encloses part of the gamma chain. CF(1) is attached to CF(0) by a central stalk formed by the gamma and epsilon chains, while a peripheral stalk is formed by the delta and b chains.

The protein localises to the cell membrane. The enzyme catalyses ATP + H2O + 4 H(+)(in) = ADP + phosphate + 5 H(+)(out). Functionally, produces ATP from ADP in the presence of a proton gradient across the membrane. The alpha chain is a regulatory subunit. The chain is ATP synthase subunit alpha from Paenarthrobacter aurescens (strain TC1).